The following is a 100-amino-acid chain: Urease subunit gamma (100 aa).

This sequence belongs to the urease gamma subunit family. In terms of assembly, heterotrimer of UreA (gamma), UreB (beta) and UreC (alpha) subunits. Three heterotrimers associate to form the active enzyme.

It is found in the cytoplasm. The enzyme catalyses urea + 2 H2O + H(+) = hydrogencarbonate + 2 NH4(+). Its pathway is nitrogen metabolism; urea degradation; CO(2) and NH(3) from urea (urease route): step 1/1. The protein is Urease subunit gamma of Bordetella bronchiseptica (strain ATCC BAA-588 / NCTC 13252 / RB50) (Alcaligenes bronchisepticus).